The following is a 200-amino-acid chain: Recombination protein RecR (200 aa).

The C4-type zinc finger occupies 59–74 (CSVCFHLSADPVCDIC). The region spanning 82-176 (TVICVVADSR…RVTRIAFGLP (95 aa)) is the Toprim domain.

It belongs to the RecR family.

May play a role in DNA repair. It seems to be involved in an RecBC-independent recombinational process of DNA repair. It may act with RecF and RecO. This is Recombination protein RecR from Acaryochloris marina (strain MBIC 11017).